We begin with the raw amino-acid sequence, 141 residues long: Large ribosomal subunit protein uL11 (141 aa).

It belongs to the universal ribosomal protein uL11 family. Part of the ribosomal stalk of the 50S ribosomal subunit. Interacts with L10 and the large rRNA to form the base of the stalk. L10 forms an elongated spine to which L12 dimers bind in a sequential fashion forming a multimeric L10(L12)X complex. In terms of processing, one or more lysine residues are methylated.

Forms part of the ribosomal stalk which helps the ribosome interact with GTP-bound translation factors. The sequence is that of Large ribosomal subunit protein uL11 from Syntrophus aciditrophicus (strain SB).